The sequence spans 531 residues: NADH-quinone oxidoreductase subunit N (531 aa).

Helical transmembrane passes span 8–28 (VEYFLLAPMLIVFSVAVAGVL), 41–61 (AQVTLALGGSAVALIAVIVVA), 81–101 (ATLFLQGTVLLVTIMAVVFMA), 146–166 (GATQTELFPLAMLSVGGMMVF), 172–192 (LLTMFVALEVLSLPLYLMCGL), 208–228 (FLLGAFSSAFFLYGVALLYGA), 250–270 (ALAGVALLAVGLLFKVGAVPF), 282–302 (PTPITGFMAAATKVAAFGALL), 318–338 (PVLWAIAILTMTVGTVTAVNQ), 350–370 (VAHVGFILTGVIADNPAGLSA), 372–392 (LFYLVAYSFSTMGAFAIVGLV), 418–438 (IVGVMLSMFLLAFAGIPLTSG), 453–473 (GAVPLVIVGVISSGVAAYFYV), and 500–520 (AAIAVCTVVTVVLGIAPQPVL).

It belongs to the complex I subunit 2 family. In terms of assembly, NDH-1 is composed of 14 different subunits. Subunits NuoA, H, J, K, L, M, N constitute the membrane sector of the complex.

It is found in the cell membrane. It carries out the reaction a quinone + NADH + 5 H(+)(in) = a quinol + NAD(+) + 4 H(+)(out). Functionally, NDH-1 shuttles electrons from NADH, via FMN and iron-sulfur (Fe-S) centers, to quinones in the respiratory chain. The immediate electron acceptor for the enzyme in this species is believed to be a menaquinone. Couples the redox reaction to proton translocation (for every two electrons transferred, four hydrogen ions are translocated across the cytoplasmic membrane), and thus conserves the redox energy in a proton gradient. The polypeptide is NADH-quinone oxidoreductase subunit N (Mycobacterium bovis (strain ATCC BAA-935 / AF2122/97)).